The following is a 356-amino-acid chain: Probable G-protein coupled receptor 32 (356 aa).

At 1-44 the chain is on the extracellular side; it reads MNGVSEGTRGCSDRQPGVLTRDRSCSRKMNSSGCLSEEVGSLRP. The N-linked (GlcNAc...) asparagine glycan is linked to Asn30. A helical membrane pass occupies residues 45-67; that stretch reads LTVVILSASIVVGVLGNGLVLWM. The Cytoplasmic portion of the chain corresponds to 68 to 78; that stretch reads TVFRMARTVST. The chain crosses the membrane as a helical span at residues 79–100; the sequence is VCFFHLALADFMLSLSLPIAMY. The Extracellular portion of the chain corresponds to 101–116; the sequence is YIVSRQWLLGEWACKL. Cys114 and Cys191 are joined by a disulfide. A helical transmembrane segment spans residues 117–137; sequence YITFVFLSYFASNCLLVFISV. At 138 to 156 the chain is on the cytoplasmic side; it reads DRCISVLYPVWALNHRTVQ. A helical transmembrane segment spans residues 157–178; that stretch reads RASWLAFGVWLLAAALCSAHLK. Topologically, residues 179–220 are extracellular; sequence FRTTRKWNGCTHCYLAFNSDNETAQIWIEGVVEGHIIGTIGH. An N-linked (GlcNAc...) asparagine glycan is attached at Asn199. A helical transmembrane segment spans residues 221-241; sequence FLLGFLGPLAIIGTCAHLIRA. At 242-257 the chain is on the cytoplasmic side; sequence KLLREGWVHANRPKRL. The helical transmembrane segment at 258–280 threads the bilayer; sequence LLVLVSAFFIFWSPFNVVLLVHL. Topologically, residues 281-300 are extracellular; the sequence is WRRVMLKEIYHPRMLLILQA. The helical transmembrane segment at 301–320 threads the bilayer; that stretch reads SFALGCVNSSLNPFLYVFVG. Topologically, residues 321 to 356 are cytoplasmic; sequence RDFQEKFFQSLTSALARAFGEEEFLSSCPRGNAPRE.

It belongs to the G-protein coupled receptor 1 family. In terms of tissue distribution, expressed in resting primary human macrophages.

Its subcellular location is the cell membrane. In terms of biological role, G-protein coupled receptor that binds to several ligands including resolvin D1 (RvD1) with high affinity, leading to rapid and transient activation of numerous intracellular signaling pathways. In macrophages, enhances the RvD1-stimulated phagocytic and clearance functions. Macrophages migrate less toward different chemoattractant stimuli but phagocytose more microbial particles. Prevents the increase in Ca(2+) and activation of ERK1/2 used by histamine and its H1 receptor subtype to induce goblet cell secretion by activating PKC and GRK2 to counter-regulate the histamine receptor. In Homo sapiens (Human), this protein is Probable G-protein coupled receptor 32 (GPR32).